A 47-amino-acid polypeptide reads, in one-letter code: Large ribosomal subunit protein bL36A (47 aa).

This sequence belongs to the bacterial ribosomal protein bL36 family.

The sequence is that of Large ribosomal subunit protein bL36A from Yersinia enterocolitica serotype O:8 / biotype 1B (strain NCTC 13174 / 8081).